Reading from the N-terminus, the 488-residue chain is NADH-quinone oxidoreductase subunit N (488 aa).

The next 14 helical transmembrane spans lie at Leu15–Tyr35, Gly42–Ala62, Asn79–Cys99, Leu108–Ala128, Leu133–Phe153, Phe168–Ala188, Trp209–Val229, Pro243–Val263, Trp277–Leu297, Met305–Thr325, Leu333–Leu353, Met376–Phe396, Val409–Tyr429, and Gly456–Ile476.

Belongs to the complex I subunit 2 family. In terms of assembly, NDH-1 is composed of 14 different subunits. Subunits NuoA, H, J, K, L, M, N constitute the membrane sector of the complex.

The protein localises to the cell inner membrane. It carries out the reaction a quinone + NADH + 5 H(+)(in) = a quinol + NAD(+) + 4 H(+)(out). Functionally, NDH-1 shuttles electrons from NADH, via FMN and iron-sulfur (Fe-S) centers, to quinones in the respiratory chain. The immediate electron acceptor for the enzyme in this species is believed to be ubiquinone. Couples the redox reaction to proton translocation (for every two electrons transferred, four hydrogen ions are translocated across the cytoplasmic membrane), and thus conserves the redox energy in a proton gradient. The polypeptide is NADH-quinone oxidoreductase subunit N (Alkalilimnicola ehrlichii (strain ATCC BAA-1101 / DSM 17681 / MLHE-1)).